A 475-amino-acid polypeptide reads, in one-letter code: Ankyrin repeat, SAM and basic leucine zipper domain-containing protein 1 (475 aa).

Over residues 1–10 (MAAGALRGLA) the composition is skewed to low complexity. A disordered region spans residues 1 to 23 (MAAGALRGLAVAGGGESSESEDD). Phosphoserine occurs at positions 17, 18, and 20. ANK repeat units follow at residues 45–74 (EKNETFKKALTTGDISLVQELLDSGISVDS), 78–107 (YGWTPLMYAASVANVELVRVLLDRGANASF), 110–144 (DKQTILITACSARGLEEQILKCVELLLSRNADPNV), 148–177 (RLMTPIMYAARDGHPQVVALLVAHGAEVNT), 181–210 (NGYTALTWAARQGHKNVVLKLLELGANKML), and 214–243 (DGKIPSEIAKRNKHLEIFNFLSLTLNPLEG). The SAM domain maps to 272–334 (SYTAFGDLEI…KILSALKELE (63 aa)).

As to quaternary structure, interacts with DDX4, PIWIL1, RANBP9 and TDRD1.

The protein localises to the cytoplasm. Plays a central role during spermatogenesis by repressing transposable elements and preventing their mobilization, which is essential for the germline integrity. Acts via the piRNA metabolic process, which mediates the repression of transposable elements during meiosis by forming complexes composed of piRNAs and Piwi proteins and governs the methylation and subsequent repression of transposons. Its association with pi-bodies suggests a participation in the primary piRNAs metabolic process. Required prior to the pachytene stage to facilitate the production of multiple types of piRNAs, including those associated with repeats involved in the regulation of retrotransposons. May act by mediating protein-protein interactions during germ cell maturation. The sequence is that of Ankyrin repeat, SAM and basic leucine zipper domain-containing protein 1 (ASZ1) from Otolemur garnettii (Small-eared galago).